A 118-amino-acid polypeptide reads, in one-letter code: Hydrogenase maturation factor HypA (118 aa).

His2 contributes to the Ni(2+) binding site. Residues Cys73, Cys76, Cys90, and Cys93 each coordinate Zn(2+).

This sequence belongs to the HypA/HybF family.

Functionally, involved in the maturation of [NiFe] hydrogenases. Required for nickel insertion into the metal center of the hydrogenase. This chain is Hydrogenase maturation factor HypA, found in Salmonella typhi.